A 341-amino-acid polypeptide reads, in one-letter code: Very-long-chain 3-oxoacyl-CoA reductase (341 aa).

The helical transmembrane segment at A17–V37 threads the bilayer. Positions 63, 117, 144, 218, 222, 251, and 253 each coordinate NADP(+). The active-site Proton donor is the Y218. K222 acts as the Lowers pKa of active site Tyr in catalysis.

Belongs to the short-chain dehydrogenases/reductases (SDR) family.

Its subcellular location is the endoplasmic reticulum membrane. The enzyme catalyses a very-long-chain (3R)-3-hydroxyacyl-CoA + NADP(+) = a very-long-chain 3-oxoacyl-CoA + NADPH + H(+). It participates in lipid metabolism; fatty acid biosynthesis. Functionally, component of the microsomal membrane bound fatty acid elongation system, which produces the 26-carbon very long-chain fatty acids (VLCFA) from palmitate. Catalyzes the reduction of the 3-ketoacyl-CoA intermediate that is formed in each cycle of fatty acid elongation. VLCFAs serve as precursors for ceramide and sphingolipids. This chain is Very-long-chain 3-oxoacyl-CoA reductase, found in Meyerozyma guilliermondii (strain ATCC 6260 / CBS 566 / DSM 6381 / JCM 1539 / NBRC 10279 / NRRL Y-324) (Yeast).